Consider the following 228-residue polypeptide: Octanoyltransferase (228 aa).

One can recognise a BPL/LPL catalytic domain in the interval 37 to 217; the sequence is AGGPDTLLLL…AVCDALDGRL (181 aa). Residues 75 to 82, 147 to 149, and 160 to 162 each bind substrate; these read RGGKITWH, AIG, and GFA. The Acyl-thioester intermediate role is filled by Cys-178.

This sequence belongs to the LipB family.

It localises to the cytoplasm. It carries out the reaction octanoyl-[ACP] + L-lysyl-[protein] = N(6)-octanoyl-L-lysyl-[protein] + holo-[ACP] + H(+). Its pathway is protein modification; protein lipoylation via endogenous pathway; protein N(6)-(lipoyl)lysine from octanoyl-[acyl-carrier-protein]: step 1/2. Functionally, catalyzes the transfer of endogenously produced octanoic acid from octanoyl-acyl-carrier-protein onto the lipoyl domains of lipoate-dependent enzymes. Lipoyl-ACP can also act as a substrate although octanoyl-ACP is likely to be the physiological substrate. The protein is Octanoyltransferase of Mycolicibacterium smegmatis (strain ATCC 700084 / mc(2)155) (Mycobacterium smegmatis).